The primary structure comprises 470 residues: Velvet complex subunit B (470 aa).

Disordered stretches follow at residues 1 to 148 (MNSS…EEGT) and 223 to 321 (VRSS…NPLF). Residues 15 to 37 (PGPGYSSSVPPPIHAYQQQQQHQ) show a composition bias toward low complexity. Positions 38-49 (HPPPSLLPPPPT) are enriched in pro residues. Residues 74-86 (HQHHAPPPPHHHS) show a composition bias toward basic residues. Positions 102–124 (NQYPRPHPLPPSRNDEPPPPSSE) are enriched in pro residues. Residues 147–452 (GTGLKYSLDV…ALQGIKIPIR (306 aa)) enclose the Velvet domain. Positions 232–241 (GASSNNYSYS) are enriched in low complexity. The span at 242–255 (TLEPSTPSYQQQAL) shows a compositional bias: polar residues. Positions 280-301 (QQGYGQAPSYQSSSSYGPPQQY) are enriched in low complexity. The segment covering 307 to 318 (GYNTDPPASSAN) has biased composition (polar residues).

The protein belongs to the velvet family. VelB subfamily. In terms of assembly, component of the heterotrimeric velvet complex composed of laeA, veA and velB; VeA acting as a bridging protein between laeA and velB. Forms a heterodimeric complex with vosA; the formation of the velB-vosA complex is light-dependent.

It is found in the nucleus. The protein resides in the cytoplasm. Component of the velvet transcription factor complex that controls sexual/asexual developmental ratio in response to light, promoting sexual development in the darkness while stimulating asexual sporulation under illumination. The velvet complex acts as a global regulator for secondary metabolite gene expression. Component of the velB-VosA heterodimeric complex that plays a dual role in activating genes associated with spore maturation and repressing certain development-associated genes. The complex binds DNA through the DNA-binding domain of vosA that recognizes an 11-nucleotide consensus sequence 5'-CTGGCCGCGGC-3' consisting of two motifs in the promoters of key developmental regulatory genes. Controls the expression of the pink pigment aurofusarin and the mycotoxin deoxynivalenol gene clusters. Regulates hyphae formation, hyphal hydrophobicity and conidiation. Regulates of cell wall integrity and pathogenicity. The polypeptide is Velvet complex subunit B (Gibberella zeae (strain ATCC MYA-4620 / CBS 123657 / FGSC 9075 / NRRL 31084 / PH-1) (Wheat head blight fungus)).